Consider the following 736-residue polypeptide: Centrosomal protein kizuna (736 aa).

Positions 10–35 form a coiled coil; that stretch reads HRAMKLQRNLRHCEGKRLELERELFQ. Polar residues predominate over residues 192 to 208; the sequence is NTSFQLSQKMPVTSVAS. Disordered stretches follow at residues 192–238, 279–305, 323–348, and 642–690; these read NTSF…SAQL, SFTHANPSGASPDACDYINNQTSDKHS, EDKQCLDSSSDLTVSISESEDDSYPP, and TVEE…NMST. Residues 210-219 show a composition bias toward basic and acidic residues; it reads EDGRTHRAQI. Over residues 328 to 339 the composition is skewed to polar residues; it reads LDSSSDLTVSIS. The segment covering 658-668 has biased composition (low complexity); it reads SETSFSSSEKS. A compositionally biased stretch (polar residues) spans 678-690; the sequence is IQPNYMKSNNMST.

Belongs to the kizuna family.

The protein localises to the cytoplasm. It is found in the cytoskeleton. Its subcellular location is the microtubule organizing center. It localises to the centrosome. The protein resides in the cilium basal body. Functionally, centrosomal protein required for establishing a robust mitotic centrosome architecture that can endure the forces that converge on the centrosomes during spindle formation. Required for stabilizing the expanded pericentriolar material around the centriole. The chain is Centrosomal protein kizuna (kiz) from Xenopus laevis (African clawed frog).